A 377-amino-acid polypeptide reads, in one-letter code: Phospho-N-acetylmuramoyl-pentapeptide-transferase (377 aa).

The next 10 membrane-spanning stretches (helical) occupy residues 2 to 22 (IQLL…TPAL), 55 to 75 (VAIL…SVLA), 82 to 102 (ITLS…VGFL), 122 to 142 (MVLQ…FPDA), 162 to 182 (LAFA…NLIA), 195 to 215 (LDGL…LITL), 236 to 256 (PMDL…FLWW), 263 to 283 (IFMG…FAVL), 288 to 308 (LLLV…ILQV), and 343 to 363 (FWVI…GDWL).

This sequence belongs to the glycosyltransferase 4 family. MraY subfamily. Mg(2+) is required as a cofactor.

It is found in the cell membrane. The catalysed reaction is UDP-N-acetyl-alpha-D-muramoyl-L-alanyl-gamma-D-glutamyl-meso-2,6-diaminopimeloyl-D-alanyl-D-alanine + di-trans,octa-cis-undecaprenyl phosphate = di-trans,octa-cis-undecaprenyl diphospho-N-acetyl-alpha-D-muramoyl-L-alanyl-D-glutamyl-meso-2,6-diaminopimeloyl-D-alanyl-D-alanine + UMP. It functions in the pathway cell wall biogenesis; peptidoglycan biosynthesis. In terms of biological role, catalyzes the initial step of the lipid cycle reactions in the biosynthesis of the cell wall peptidoglycan: transfers peptidoglycan precursor phospho-MurNAc-pentapeptide from UDP-MurNAc-pentapeptide onto the lipid carrier undecaprenyl phosphate, yielding undecaprenyl-pyrophosphoryl-MurNAc-pentapeptide, known as lipid I. This Kocuria rhizophila (strain ATCC 9341 / DSM 348 / NBRC 103217 / DC2201) protein is Phospho-N-acetylmuramoyl-pentapeptide-transferase.